A 534-amino-acid polypeptide reads, in one-letter code: Glucan endo-1,3-beta-glucosidase 12 (534 aa).

Residues 1 to 24 (MGQRLNLVFWIFVSILAFLNFGMA) form the signal peptide. Glutamate 120 serves as the catalytic Proton donor. N-linked (GlcNAc...) asparagine glycosylation is present at asparagine 127. The active-site Nucleophile is glutamate 264. N-linked (GlcNAc...) asparagine glycosylation is found at asparagine 336, asparagine 357, and asparagine 375. A disordered region spans residues 348–379 (ENTTPVSPTNSTTGTSPSPSSSPIINGNSTVT). The segment covering 349–377 (NTTPVSPTNSTTGTSPSPSSSPIINGNST) has biased composition (low complexity). Cysteine 392 and cysteine 455 form a disulfide bridge. Asparagine 485, asparagine 491, and asparagine 495 each carry an N-linked (GlcNAc...) asparagine glycan. A lipid anchor (GPI-anchor amidated serine) is attached at serine 507. Residues 508 to 534 (STNEAFRQMVVAVSVLLPCFVVCSSIW) constitute a propeptide, removed in mature form.

The protein belongs to the glycosyl hydrolase 17 family. In terms of processing, contains two additional disulfide bonds.

It localises to the secreted. Its subcellular location is the cell wall. It is found in the cell membrane. The enzyme catalyses Hydrolysis of (1-&gt;3)-beta-D-glucosidic linkages in (1-&gt;3)-beta-D-glucans.. This chain is Glucan endo-1,3-beta-glucosidase 12, found in Arabidopsis thaliana (Mouse-ear cress).